We begin with the raw amino-acid sequence, 653 residues long: Transmembrane and coiled-coil domains protein 1 (653 aa).

An N-acetylmethionine modification is found at M1. 4 disordered regions span residues 1–35, 58–78, 112–165, and 204–227; these read MEPS…QKLS, HQRR…ADPE, PPKM…APTS, and TSSA…TPDP. The Cytoplasmic portion of the chain corresponds to 1-591; sequence MEPSGSEQLF…ARNLLGKLIN (591 aa). The span at 20-34 shows a compositional bias: basic and acidic residues; it reads QDAEARKQTESEQKL. The span at 64-74 shows a compositional bias: polar residues; it reads SVSPHDVQQIQ. A compositionally biased stretch (basic residues) spans 113-125; it reads PKMKRGTSLHSRR. Residues 135-144 are compositionally biased toward polar residues; it reads PQINRKSGQE. Residues 153–165 show a composition bias toward low complexity; that stretch reads RPRSSSTTDAPTS. Positions 204 to 218 are enriched in polar residues; it reads TSSAVASSTDGSIHT. A coiled-coil region spans residues 228 to 313; it reads QRTKAAIAHL…RKLREVEQNG (86 aa). Phosphoserine is present on residues S382 and S414. The segment at 415–437 is disordered; that stretch reads PKYGSEEDCSSATSGSVGANSTT. Positions 424 to 437 are enriched in polar residues; the sequence is SSATSGSVGANSTT. Positions 458–576 form a coiled coil; it reads GFDALLHEIQ…QQQQVVQLEG (119 aa). 2 helical membrane passes run 592–612 and 625–645; these read ILLA…NCVV and LFLV…FSYV. The Cytoplasmic segment spans residues 646–653; the sequence is ERFFSSPR.

This sequence belongs to the TEX28 family. May form homodimers and heterodimers with TMCC2 or TMCC3 via the coiled-coil domains. Interacts with ribosomal proteins RPL4 and RPS6.

It is found in the endoplasmic reticulum membrane. Functionally, endoplasmic reticulum membrane protein that promotes endoplasmic reticulum-associated endosome fission. Localizes to contact sites between the endoplasmic reticulum and endosomes and acts by promoting recruitment of the endoplasmic reticulum to endosome tubules for fission. Endosome membrane fission of early and late endosomes is essential to separate regions destined for lysosomal degradation from carriers to be recycled to the plasma membrane. This chain is Transmembrane and coiled-coil domains protein 1, found in Homo sapiens (Human).